A 442-amino-acid polypeptide reads, in one-letter code: Cytokine receptor-like factor 3 (442 aa).

N-acetylmethionine is present on methionine 1. Residues 10–57 (ELLLQEARENVEAAQSYRRELGHRLEGLREARRQIKESASQTRDVLKQ) adopt a coiled-coil conformation. Positions 181-274 (PPVQIEELIE…PQIGHSTLVP (94 aa)) constitute a Fibronectin type-III domain.

This sequence belongs to the cytokine receptor-like factor 3 family. As to expression, expressed in several embryonic and adult tissues, including adult and fetal brain, liver, spleen and pancreas. Expressed in adult, but not fetal kidney. Expressed in skin and squamous cell carcinoma (SCC) and in several other cancer types. Also detected in lesion actinic keratosis (AK).

Its subcellular location is the cytoplasm. Its function is as follows. May play a role in the negative regulation of cell cycle progression. This Homo sapiens (Human) protein is Cytokine receptor-like factor 3 (CRLF3).